We begin with the raw amino-acid sequence, 506 residues long: Lysine--tRNA ligase (506 aa).

Mg(2+) is bound by residues E416 and E423.

It belongs to the class-II aminoacyl-tRNA synthetase family. As to quaternary structure, homodimer. It depends on Mg(2+) as a cofactor.

Its subcellular location is the cytoplasm. It carries out the reaction tRNA(Lys) + L-lysine + ATP = L-lysyl-tRNA(Lys) + AMP + diphosphate. The polypeptide is Lysine--tRNA ligase (Bordetella parapertussis (strain 12822 / ATCC BAA-587 / NCTC 13253)).